Consider the following 429-residue polypeptide: Histidinol dehydrogenase (429 aa).

3 residues coordinate NAD(+): Y131, Q193, and N216. Residues S239, Q261, and H264 each coordinate substrate. 2 residues coordinate Zn(2+): Q261 and H264. Active-site proton acceptor residues include E327 and H328. Substrate-binding residues include H328, D361, E415, and H420. D361 serves as a coordination point for Zn(2+). H420 contacts Zn(2+).

The protein belongs to the histidinol dehydrogenase family. It depends on Zn(2+) as a cofactor.

The catalysed reaction is L-histidinol + 2 NAD(+) + H2O = L-histidine + 2 NADH + 3 H(+). The protein operates within amino-acid biosynthesis; L-histidine biosynthesis; L-histidine from 5-phospho-alpha-D-ribose 1-diphosphate: step 9/9. Its function is as follows. Catalyzes the sequential NAD-dependent oxidations of L-histidinol to L-histidinaldehyde and then to L-histidine. The polypeptide is Histidinol dehydrogenase (hisD) (Methanocaldococcus jannaschii (strain ATCC 43067 / DSM 2661 / JAL-1 / JCM 10045 / NBRC 100440) (Methanococcus jannaschii)).